A 563-amino-acid polypeptide reads, in one-letter code: Inclusion body clearance protein IML2 (563 aa).

This sequence belongs to the IML2 family. In terms of assembly, interacts with lipid droplet proteins.

The protein resides in the cytoplasm. It is found in the nucleus. In terms of biological role, inclusion body (IB) resident protein that interacts strongly with lipid droplet (LD) proteins. Involved in LD-mediated IB clearing after protein folding stress, probably by enabling access to the IBs of an LD-stored soluble sterol derivative that acts as a chaperone in inclusion clearing. This Schizosaccharomyces pombe (strain 972 / ATCC 24843) (Fission yeast) protein is Inclusion body clearance protein IML2.